Reading from the N-terminus, the 600-residue chain is ATP-dependent lipid A-core flippase (600 aa).

A run of 4 helical transmembrane segments spans residues 27-47 (ISLF…QPML), 83-103 (LLII…NYFL), 174-194 (LLFM…LIAV), and 267-287 (PLLQ…VLYL). An ABC transmembrane type-1 domain is found at 31–322 (LISIVGFLIF…LSEVSSTIQK (292 aa)). The region spanning 354-590 (LDVRNLSFTY…NGYYARLNAM (237 aa)) is the ABC transporter domain. 388-395 (GRSGSGKS) is a binding site for ATP.

The protein belongs to the ABC transporter superfamily. Lipid exporter (TC 3.A.1.106) family. In terms of assembly, homodimer.

The protein localises to the cell inner membrane. It catalyses the reaction ATP + H2O + lipid A-core oligosaccharideSide 1 = ADP + phosphate + lipid A-core oligosaccharideSide 2.. In terms of biological role, involved in lipopolysaccharide (LPS) biosynthesis. Translocates lipid A-core from the inner to the outer leaflet of the inner membrane. Transmembrane domains (TMD) form a pore in the inner membrane and the ATP-binding domain (NBD) is responsible for energy generation. In Pseudomonas fluorescens (strain Pf0-1), this protein is ATP-dependent lipid A-core flippase.